The sequence spans 362 residues: Carbamoyl phosphate synthase small chain (362 aa).

The tract at residues 1 to 169 (MGKRLLILED…TKTAYPAPGV (169 aa)) is CPSase. Ser-46, Gly-220, and Gly-222 together coordinate L-glutamine. The Glutamine amidotransferase type-1 domain occupies 172-358 (NIVLVDFGLK…LELIDAFQLE (187 aa)). The active-site Nucleophile is Cys-247. Met-248, Gln-251, Asn-289, Gly-291, and Tyr-292 together coordinate L-glutamine. Residues His-331 and Asp-333 contribute to the active site.

The protein belongs to the CarA family. Composed of two chains; the small (or glutamine) chain promotes the hydrolysis of glutamine to ammonia, which is used by the large (or ammonia) chain to synthesize carbamoyl phosphate. Tetramer of heterodimers (alpha,beta)4.

It carries out the reaction hydrogencarbonate + L-glutamine + 2 ATP + H2O = carbamoyl phosphate + L-glutamate + 2 ADP + phosphate + 2 H(+). The enzyme catalyses L-glutamine + H2O = L-glutamate + NH4(+). It functions in the pathway amino-acid biosynthesis; L-arginine biosynthesis; carbamoyl phosphate from bicarbonate: step 1/1. It participates in pyrimidine metabolism; UMP biosynthesis via de novo pathway; (S)-dihydroorotate from bicarbonate: step 1/3. Functionally, small subunit of the glutamine-dependent carbamoyl phosphate synthetase (CPSase). CPSase catalyzes the formation of carbamoyl phosphate from the ammonia moiety of glutamine, carbonate, and phosphate donated by ATP, constituting the first step of 2 biosynthetic pathways, one leading to arginine and/or urea and the other to pyrimidine nucleotides. The small subunit (glutamine amidotransferase) binds and cleaves glutamine to supply the large subunit with the substrate ammonia. In Streptococcus mutans serotype c (strain ATCC 700610 / UA159), this protein is Carbamoyl phosphate synthase small chain.